A 407-amino-acid polypeptide reads, in one-letter code: MAAPGAPRSLLLLLLAGLAHGASALFVVKDSNGTACIMANFSASFFTIYETGHGSKNSTFELPSSAEVLNSNSSCGRENVSEPILTIAFGSGYLLTLNFTRNATRYSVQDMYFAYNLSDTQHFLNASNKGIHSVDSSTDIKADINKTYRCLSAIQVHMGNVTVTLSDATIQAYLLNSNFSKEETRCTQDGPSPTTVPPSPSPPLVPTNPTVIKYNVTGENGTCLLASMALQMNITYMKKDNMTVTRALNISPNDTASGSCSPHVVTLTVESKNSILDLKFGMNGSSSLFFLQEVRLNMTLPDANVSSLMASNQSLRALQATVGNSYKCNTEEHIFVTKEFSLNVFSVQVQAFKVESDRFGSVEECMQDGNNMLIPIAVGGALAGLVLIVLIAYLIGRKRSHAGYQTI.

The N-terminal stretch at 1 to 21 (MAAPGAPRSLLLLLLAGLAHG) is a signal peptide. The first lumenal domain stretch occupies residues 22 to 189 (ASALFVVKDS…SKEETRCTQD (168 aa)). At 22–371 (ASALFVVKDS…VEECMQDGNN (350 aa)) the chain is on the lumenal side. 12 N-linked (GlcNAc...) asparagine glycosylation sites follow: asparagine 32, asparagine 40, asparagine 57, asparagine 72, asparagine 79, asparagine 98, asparagine 102, asparagine 116, asparagine 125, asparagine 145, asparagine 160, and asparagine 178. Cysteine 36 and cysteine 75 are joined by a disulfide. The cysteines at positions 150 and 186 are disulfide-linked. Residues 183 to 206 (ETRCTQDGPSPTTVPPSPSPPLVP) are disordered. The segment at 190 to 219 (GPSPTTVPPSPSPPLVPTNPTVIKYNVTGE) is hinge. Residues 194 to 206 (TTVPPSPSPPLVP) are compositionally biased toward pro residues. Asparagine 215, asparagine 220, asparagine 233, asparagine 241, asparagine 253, asparagine 283, asparagine 297, asparagine 304, and asparagine 312 each carry an N-linked (GlcNAc...) asparagine glycan. The second lumenal domain stretch occupies residues 220–371 (NGTCLLASMA…VEECMQDGNN (152 aa)). Cysteine 223 and cysteine 260 are joined by a disulfide. A disulfide bridge connects residues cysteine 328 and cysteine 365. Residues 372-395 (MLIPIAVGGALAGLVLIVLIAYLI) form a helical membrane-spanning segment. Topologically, residues 396 to 407 (GRKRSHAGYQTI) are cytoplasmic.

This sequence belongs to the LAMP family. In terms of assembly, interacts with ABCB9; this interaction strongly stabilizes ABCB9 and protects ABCB9 against lysosomal degradation. Interacts with FURIN. Interacts with TMEM175; inhibiting the proton channel activity of TMEM175. Post-translationally, O- and N-glycosylated; some of the N-glycans attached to LAMP-1 are polylactosaminoglycans.

The protein localises to the lysosome membrane. It localises to the endosome membrane. It is found in the late endosome membrane. Its subcellular location is the cell membrane. The protein resides in the cytolytic granule membrane. In terms of biological role, lysosomal membrane glycoprotein which plays an important role in lysosome biogenesis, lysosomal pH regulation, autophagy and cholesterol homeostasis. Acts as an important regulator of lysosomal lumen pH regulation by acting as a direct inhibitor of the proton channel TMEM175, facilitating lysosomal acidification for optimal hydrolase activity. Also plays an important role in NK-cells cytotoxicity. Mechanistically, participates in cytotoxic granule movement to the cell surface and perforin trafficking to the lytic granule. In addition, protects NK-cells from degranulation-associated damage induced by their own cytotoxic granule content. Presents carbohydrate ligands to selectins. The polypeptide is Lysosome-associated membrane glycoprotein 1 (LAMP1) (Cricetulus griseus (Chinese hamster)).